Consider the following 238-residue polypeptide: Uridylate kinase (238 aa).

An ATP-binding site is contributed by lysine 12–glycine 15. Glycine 54 contributes to the UMP binding site. The ATP site is built by glycine 55 and arginine 59. UMP-binding positions include aspartate 74 and threonine 135–threonine 142. ATP is bound by residues threonine 162, tyrosine 168, and aspartate 171.

The protein belongs to the UMP kinase family. In terms of assembly, homohexamer.

It localises to the cytoplasm. It catalyses the reaction UMP + ATP = UDP + ADP. The protein operates within pyrimidine metabolism; CTP biosynthesis via de novo pathway; UDP from UMP (UMPK route): step 1/1. Its activity is regulated as follows. Inhibited by UTP. Catalyzes the reversible phosphorylation of UMP to UDP. This is Uridylate kinase from Dechloromonas aromatica (strain RCB).